Reading from the N-terminus, the 461-residue chain is Phosphoglucosamine mutase (461 aa).

S107 (phosphoserine intermediate) is an active-site residue. S107, D254, D256, and D258 together coordinate Mg(2+). S107 is subject to Phosphoserine.

It belongs to the phosphohexose mutase family. It depends on Mg(2+) as a cofactor. In terms of processing, activated by phosphorylation.

It catalyses the reaction alpha-D-glucosamine 1-phosphate = D-glucosamine 6-phosphate. Catalyzes the conversion of glucosamine-6-phosphate to glucosamine-1-phosphate. The chain is Phosphoglucosamine mutase from Bifidobacterium longum (strain DJO10A).